The sequence spans 175 residues: uncharacterized protein (175 aa).

Polar residues predominate over residues 1-14; it reads MNTSSRIQLPSSND. Disordered regions lie at residues 1-31 and 127-175; these read MNTSSRIQLPSSNDAHVYDGRSNEPKASKRS and ARSR…QSKR. Residues 16-27 are compositionally biased toward basic and acidic residues; that stretch reads HVYDGRSNEPKA. The span at 130–149 shows a compositional bias: low complexity; the sequence is RASSVSNSRLNSRTNSSVSL. Positions 154–175 are enriched in polar residues; that stretch reads GSSSWKNKIKNAVSNVTDQSKR.

It is found in the cytoplasm. It localises to the nucleus. This is an uncharacterized protein from Schizosaccharomyces pombe (strain 972 / ATCC 24843) (Fission yeast).